Here is a 735-residue protein sequence, read N- to C-terminus: Phosphoribosylformylglycinamidine synthase subunit PurL (735 aa).

H49 is an active-site residue. Y52 and K91 together coordinate ATP. Mg(2+) is bound at residue E93. Substrate is bound by residues 94 to 97 (SHNH) and R116. The active-site Proton acceptor is H95. D117 serves as a coordination point for Mg(2+). Q240 is a substrate binding site. D268 lines the Mg(2+) pocket. 312 to 314 (ESQ) is a substrate binding site. Residues D493 and G530 each coordinate ATP. N531 is a binding site for Mg(2+). S533 is a substrate binding site.

The protein belongs to the FGAMS family. In terms of assembly, monomer. Part of the FGAM synthase complex composed of 1 PurL, 1 PurQ and 2 PurS subunits.

The protein resides in the cytoplasm. The catalysed reaction is N(2)-formyl-N(1)-(5-phospho-beta-D-ribosyl)glycinamide + L-glutamine + ATP + H2O = 2-formamido-N(1)-(5-O-phospho-beta-D-ribosyl)acetamidine + L-glutamate + ADP + phosphate + H(+). The protein operates within purine metabolism; IMP biosynthesis via de novo pathway; 5-amino-1-(5-phospho-D-ribosyl)imidazole from N(2)-formyl-N(1)-(5-phospho-D-ribosyl)glycinamide: step 1/2. In terms of biological role, part of the phosphoribosylformylglycinamidine synthase complex involved in the purines biosynthetic pathway. Catalyzes the ATP-dependent conversion of formylglycinamide ribonucleotide (FGAR) and glutamine to yield formylglycinamidine ribonucleotide (FGAM) and glutamate. The FGAM synthase complex is composed of three subunits. PurQ produces an ammonia molecule by converting glutamine to glutamate. PurL transfers the ammonia molecule to FGAR to form FGAM in an ATP-dependent manner. PurS interacts with PurQ and PurL and is thought to assist in the transfer of the ammonia molecule from PurQ to PurL. The chain is Phosphoribosylformylglycinamidine synthase subunit PurL from Azorhizobium caulinodans (strain ATCC 43989 / DSM 5975 / JCM 20966 / LMG 6465 / NBRC 14845 / NCIMB 13405 / ORS 571).